The primary structure comprises 273 residues: Putative pyruvate, phosphate dikinase regulatory protein (273 aa).

149–156 (GPSRTSKT) is an ADP binding site.

The protein belongs to the pyruvate, phosphate/water dikinase regulatory protein family. PDRP subfamily.

It catalyses the reaction N(tele)-phospho-L-histidyl/L-threonyl-[pyruvate, phosphate dikinase] + ADP = N(tele)-phospho-L-histidyl/O-phospho-L-threonyl-[pyruvate, phosphate dikinase] + AMP + H(+). The enzyme catalyses N(tele)-phospho-L-histidyl/O-phospho-L-threonyl-[pyruvate, phosphate dikinase] + phosphate + H(+) = N(tele)-phospho-L-histidyl/L-threonyl-[pyruvate, phosphate dikinase] + diphosphate. Functionally, bifunctional serine/threonine kinase and phosphorylase involved in the regulation of the pyruvate, phosphate dikinase (PPDK) by catalyzing its phosphorylation/dephosphorylation. This chain is Putative pyruvate, phosphate dikinase regulatory protein, found in Rickettsia typhi (strain ATCC VR-144 / Wilmington).